The following is a 53-amino-acid chain: Conotoxin Cal6.31 (53 aa).

The N-terminal stretch at 1 to 24 (MKLTCVLIAAVLLLAVCQLDSADA) is a signal peptide. Intrachain disulfides connect Cys-29–Cys-43, Cys-36–Cys-47, and Cys-42–Cys-51.

The protein belongs to the conotoxin O1 superfamily. In terms of tissue distribution, expressed by the venom duct.

Its subcellular location is the secreted. In terms of biological role, probable neurotoxin. This chain is Conotoxin Cal6.31, found in Californiconus californicus (California cone).